The following is a 244-amino-acid chain: Tyrosine recombinase XerD-like (244 aa).

Residues 1–73 enclose the Core-binding (CB) domain; it reads MRDRISAFLE…ACNQFLYFLY (73 aa). A Tyr recombinase domain is found at 90–244; it reads AEKKTEKPEI…KTVLTLEKYR (155 aa). Catalysis depends on residues K150 and R211. Residue Y243 is the O-(3'-phospho-DNA)-tyrosine intermediate of the active site.

It belongs to the 'phage' integrase family. XerD-like subfamily.

It is found in the cytoplasm. In terms of biological role, putative tyrosine recombinase. Not involved in the cutting and rejoining of the recombining DNA molecules on dif(SL) site. The chain is Tyrosine recombinase XerD-like from Streptococcus pneumoniae serotype 2 (strain D39 / NCTC 7466).